Here is a 129-residue protein sequence, read N- to C-terminus: ATP synthase epsilon chain (129 aa).

This sequence belongs to the ATPase epsilon chain family. F-type ATPases have 2 components, CF(1) - the catalytic core - and CF(0) - the membrane proton channel. CF(1) has five subunits: alpha(3), beta(3), gamma(1), delta(1), epsilon(1). CF(0) has three main subunits: a, b and c.

It is found in the cell inner membrane. In terms of biological role, produces ATP from ADP in the presence of a proton gradient across the membrane. The polypeptide is ATP synthase epsilon chain (Campylobacter fetus subsp. fetus (strain 82-40)).